Here is a 323-residue protein sequence, read N- to C-terminus: MNKEEQEDPQQEQISTVQENDPRNLQQLGMLLVSPGLDEDRLSEKMISKIKKSRDIEKNQKLLISRLSQKEEDHSGKPPTITTSPAEKTVPFKSLNHSLKRKRVPPALNFSDIQASSHLHGSKSAPPNITRFPQHKNSLRVRYMGRMAPTNQDYHPSVANSYMTATYPYPYTGLPPVPCYPYSSTPTQTHAYEGYYSPMYPGPLYNNGIIPADYHAKRKKLAGRSPHLEDLTSRKRTFVSKHHNGDPIISKTDEDIECSVTKNSLSEGASLNDDADDDNDKERIIIGEISLYDDVFKFEVRDDKNDYMKACETIWTEWHNLKK.

Residues M1 to Q10 are compositionally biased toward acidic residues. The disordered stretch occupies residues M1–Q26. The segment covering Q11 to Q26 has biased composition (polar residues). S34 is subject to Phosphoserine. The disordered stretch occupies residues L67 to E87. Residues S225, S266, and S270 each carry the phosphoserine modification.

Forms a complex with DIG1, STE12 and either FUS3 or KSS1. The interaction of FUS3 with STE12 depends on the presence of both DIG1 and DIG2. STE12 is lost from FUS3/DIG1/DIG2 complex after pheromone treatment. DIG1 and DIG2 have also been reported to interact with CLN1 and CLN2. Phosphorylated by FUS3 and KSS1, in a pheromone-stimulated manner.

The protein localises to the nucleus. In terms of biological role, DIG2 and DIG1 are negative regulators of the filamentation and pheromone induced mating program. DIG1 and DIG2 inhibit the transcriptional activity of STE12 by direct protein-protein interaction. DIG2 binds to the DNA binding domain (DBD) of STE12 and thus inhibits transcription when overexpressed. This chain is Down-regulator of invasive growth 2 (DIG2), found in Saccharomyces cerevisiae (strain ATCC 204508 / S288c) (Baker's yeast).